Here is a 192-residue protein sequence, read N- to C-terminus: MFKNTFQSGFLSILYSIGSKPLQIWDKKVRNGHIKRITDNDIQSLVLEVEGTNVSTTYITCPADPKKTLGIKLPFLVMIIKNLKKYFTFEVQVLDDKNVRRRFRASNYQSTTRVKPFICTMPMRLDDGWNQIQFNLSDFTRRAYGTNYIETLRVQIHANCRIRRVYFSDRLYSEDELPAEFKLYLPVQNKAK.

The protein belongs to the CFAP20 family.

Its subcellular location is the nucleus. The protein localises to the cytoplasm. It is found in the cytoskeleton. It localises to the microtubule organizing center. The protein resides in the centrosome. Its subcellular location is the centriole. The protein localises to the cilium basal body. It is found in the cilium axoneme. Functionally, cilium- and flagellum-specific protein that plays a role in axonemal structure organization and motility. Microtubule inner protein (MIP) part of the dynein-decorated doublet microtubules (DMTs) in cilia axoneme, which is required for motile cilia beating. Involved in the regulation of the size and morphology of cilia. Required for axonemal microtubules polyglutamylation. Plays a role in cilia stability. The polypeptide is Cilia- and flagella-associated protein 20 (cfap20) (Danio rerio (Zebrafish)).